Here is a 265-residue protein sequence, read N- to C-terminus: Chlorophyll a-b binding protein 1C, chloroplastic (265 aa).

The transit peptide at Met-1–Thr-34 directs the protein to the chloroplast. The chain crosses the membrane as a helical span at residues Leu-151–Val-171. 6 residues coordinate chlorophyll b: Val-152, Ser-156, Gln-164, Glu-172, Arg-175, and Leu-181. Chlorophyll a is bound by residues Lys-212, Glu-213, Asn-216, Arg-218, Gln-230, His-245, and Ala-254. A helical transmembrane segment spans residues Leu-219–Leu-239. Position 261 (Phe-261) interacts with chlorophyll b.

The protein belongs to the light-harvesting chlorophyll a/b-binding (LHC) protein family. The LHC complex consists of chlorophyll a-b binding proteins. It depends on Binds at least 14 chlorophylls (8 Chl-a and 6 Chl-b) and carotenoids such as lutein and neoxanthin. as a cofactor. Photoregulated by reversible phosphorylation of its threonine residues.

The protein resides in the plastid. The protein localises to the chloroplast thylakoid membrane. In terms of biological role, the light-harvesting complex (LHC) functions as a light receptor, it captures and delivers excitation energy to photosystems with which it is closely associated. This Solanum lycopersicum (Tomato) protein is Chlorophyll a-b binding protein 1C, chloroplastic (CAB1C).